The sequence spans 128 residues: LIM domain-containing protein 2 (128 aa).

M1 is subject to N-acetylmethionine. Positions 1–25 are disordered; it reads MFQAAGAAQATPSHEAKGSSGSSTV. The 61-residue stretch at 39-99 folds into the LIM zinc-binding domain; the sequence is ETCAACQKTV…RPHFQQLFKS (61 aa). Positions 41, 44, 62, 65, 68, 71, 89, and 92 each coordinate Zn(2+).

As to quaternary structure, interacts with ILK.

The protein resides in the cytoplasm. It is found in the nucleus. Acts as an activator of the protein-kinase ILK, thereby regulating cell motility. The chain is LIM domain-containing protein 2 from Mus musculus (Mouse).